The primary structure comprises 81 residues: Probable antimicrobial peptide Con13 (81 aa).

Positions 1–22 are cleaved as a signal peptide; that stretch reads MNRKLLLVFLVVAMLVMQPAEA. Positions 66–81 are excised as a propeptide; sequence EAGQIPFDEFMDVLYS.

The protein belongs to the non-disulfide-bridged peptide (NDBP) superfamily. Long chain multifunctional peptide (group 2) family. In terms of tissue distribution, expressed by the venom gland.

Its subcellular location is the secreted. It is found in the target cell membrane. Functionally, at high concentrations, acts as a pore former in cellular membranes and causes the leakage of the cells. At submicromolar concentrations, degranulates granulocytes and has a weak hemolytic activity against human erythrocytes. Also strongly inhibits the production of superoxide anions. Has a strong antibacterial activity against Gram-negative bacteria but is less active against Gram-positive bacteria. Also has antifungal activity. In Opisthacanthus cayaporum (South American scorpion), this protein is Probable antimicrobial peptide Con13.